We begin with the raw amino-acid sequence, 1710 residues long: Extracellular matrix protein A (1710 aa).

Positions 1-22 are cleaved as a signal peptide; sequence MKISIFILLLFISSMVIISVNA. 66 Cys-rich CT repeats span residues 43-70, 71-94, 95-117, 118-141, 142-165, 166-189, 190-213, 214-237, 238-261, 262-285, 286-309, 310-333, 334-357, 358-381, 382-405, 406-429, 430-453, 454-477, 478-501, 502-525, 526-549, 550-573, 574-597, 598-621, 622-645, 646-669, 670-693, 694-717, 718-741, 742-765, 766-789, 790-813, 814-837, 838-861, 862-885, 886-909, 910-933, 934-957, 958-981, 982-1005, 1006-1029, 1030-1053, 1054-1077, 1078-1101, 1102-1125, 1126-1149, 1150-1173, 1174-1197, 1198-1221, 1222-1245, 1246-1269, 1270-1293, 1294-1317, 1318-1341, 1342-1365, 1366-1389, 1390-1413, 1414-1437, 1438-1461, 1462-1485, 1486-1509, 1511-1534, 1558-1581, 1582-1606, 1608-1632, and 1658-1682; these read NRWS…CDDE, NACT…VDDK, NPCT…CDDK, NACT…CDDN, NPCT…VDDN, NPCT…VDDL, NKCT…CDDN, NACT…CDDK, NQCT…TDDN, NKCT…TDDN, KACT…CDDN, NACT…CDDS, NKCT…CDDS, NACT…TDDN, NACT…CDDR, NPCT…TDDS, DKCT…CDDN, DACT…TDDN, NKCT…CDDG, NKCT…CPKP, DKCS…CTSD, NKCQ…CDDG, NACT…LPKN, NKCI…CECD, and NPKT…VITS. 2 N-linked (GlcNAc...) asparagine glycosylation sites follow: N150 and N151. N270 and N271 each carry an N-linked (GlcNAc...) asparagine glycan. An N-linked (GlcNAc...) asparagine glycan is attached at N415. A glycan (N-linked (GlcNAc...) asparagine) is linked at N535. A glycan (N-linked (GlcNAc...) asparagine) is linked at N655. An N-linked (GlcNAc...) asparagine glycan is attached at N751. N-linked (GlcNAc...) asparagine glycosylation is found at N871, N894, and N895. N-linked (GlcNAc...) asparagine glycosylation is present at N1015. 2 N-linked (GlcNAc...) asparagine glycosylation sites follow: N1110 and N1111. The N-linked (GlcNAc...) asparagine glycan is linked to N1183. N1255 is a glycosylation site (N-linked (GlcNAc...) asparagine). A glycan (N-linked (GlcNAc...) asparagine) is linked at N1351. N1530 carries an N-linked (GlcNAc...) asparagine glycan. N1624 carries an N-linked (GlcNAc...) asparagine glycan.

The protein localises to the secreted. In Dictyostelium discoideum (Social amoeba), this protein is Extracellular matrix protein A (ecmA).